The following is a 344-amino-acid chain: NAD-dependent alcohol dehydrogenase (344 aa).

Positions 38, 66, 96, 99, 102, 110, and 152 each coordinate Zn(2+).

It belongs to the zinc-containing alcohol dehydrogenase family. In terms of assembly, homodimer and homotetramer. It depends on Zn(2+) as a cofactor.

The catalysed reaction is a primary alcohol + NAD(+) = an aldehyde + NADH + H(+). The enzyme catalyses a secondary alcohol + NAD(+) = a ketone + NADH + H(+). This is NAD-dependent alcohol dehydrogenase (adh) from Sulfolobus acidocaldarius (strain ATCC 33909 / DSM 639 / JCM 8929 / NBRC 15157 / NCIMB 11770).